We begin with the raw amino-acid sequence, 315 residues long: CRISPR-associated endonuclease Cas1 1 (315 aa).

The Mn(2+) site is built by glutamate 144, histidine 208, and glutamate 223.

Belongs to the CRISPR-associated endonuclease Cas1 family. Homodimer, forms a heterotetramer with a Cas2 homodimer. Requires Mg(2+) as cofactor. It depends on Mn(2+) as a cofactor.

In terms of biological role, CRISPR (clustered regularly interspaced short palindromic repeat), is an adaptive immune system that provides protection against mobile genetic elements (viruses, transposable elements and conjugative plasmids). CRISPR clusters contain spacers, sequences complementary to antecedent mobile elements, and target invading nucleic acids. CRISPR clusters are transcribed and processed into CRISPR RNA (crRNA). Acts as a dsDNA endonuclease. Involved in the integration of spacer DNA into the CRISPR cassette. The chain is CRISPR-associated endonuclease Cas1 1 from Thermus thermophilus (strain ATCC 27634 / DSM 579 / HB8).